We begin with the raw amino-acid sequence, 542 residues long: Nuclear hormone receptor family member nhr-35 (542 aa).

The segment at residues asparagine 74–serine 149 is a DNA-binding region (nuclear receptor). 2 NR C4-type zinc fingers span residues cysteine 77–cysteine 97 and cysteine 113–cysteine 137. Residues glutamate 186–glutamate 438 enclose the NR LBD domain. A disordered region spans residues arginine 445–leucine 487. The span at glutamine 448 to methionine 464 shows a compositional bias: polar residues. Positions threonine 475–leucine 487 are enriched in low complexity.

The protein belongs to the nuclear hormone receptor family.

It is found in the nucleus. Its function is as follows. Orphan nuclear receptor. This Caenorhabditis elegans protein is Nuclear hormone receptor family member nhr-35 (nhr-35).